Here is a 139-residue protein sequence, read N- to C-terminus: Hydrogenase maturation factor HypA (139 aa).

His2 is a binding site for Ni(2+). Residues Cys73, Cys76, Cys110, and Cys113 each coordinate Zn(2+).

This sequence belongs to the HypA/HybF family.

Involved in the maturation of [NiFe] hydrogenases. Required for nickel insertion into the metal center of the hydrogenase. In Pyrococcus abyssi (strain GE5 / Orsay), this protein is Hydrogenase maturation factor HypA.